We begin with the raw amino-acid sequence, 131 residues long: Small ribosomal subunit protein bS6 (131 aa).

The tract at residues 92–131 is disordered; it reads RVDEHKDGPSVQMQKRDERERGDRGDRGERRERRDRDDRN.

It belongs to the bacterial ribosomal protein bS6 family.

Its function is as follows. Binds together with bS18 to 16S ribosomal RNA. This is Small ribosomal subunit protein bS6 from Paracoccus denitrificans (strain Pd 1222).